A 266-amino-acid polypeptide reads, in one-letter code: Indole-3-glycerol phosphate synthase (266 aa).

This sequence belongs to the TrpC family.

It catalyses the reaction 1-(2-carboxyphenylamino)-1-deoxy-D-ribulose 5-phosphate + H(+) = (1S,2R)-1-C-(indol-3-yl)glycerol 3-phosphate + CO2 + H2O. Its pathway is amino-acid biosynthesis; L-tryptophan biosynthesis; L-tryptophan from chorismate: step 4/5. The sequence is that of Indole-3-glycerol phosphate synthase from Opitutus terrae (strain DSM 11246 / JCM 15787 / PB90-1).